A 588-amino-acid chain; its full sequence is ATP-dependent lipid A-core flippase (588 aa).

6 helical membrane-spanning segments follow: residues Phe-23 to Gly-43, Phe-56 to Thr-76, Asp-141 to Met-161, Val-162 to Val-182, Leu-257 to Ile-277, and Thr-278 to Met-298. The 283-residue stretch at Leu-28–Arg-310 folds into the ABC transmembrane type-1 domain. Positions Ile-342 to Val-576 constitute an ABC transporter domain. Gly-375–Thr-382 is an ATP binding site.

Belongs to the ABC transporter superfamily. Lipid exporter (TC 3.A.1.106) family. As to quaternary structure, homodimer.

The protein resides in the cell inner membrane. The catalysed reaction is ATP + H2O + lipid A-core oligosaccharideSide 1 = ADP + phosphate + lipid A-core oligosaccharideSide 2.. Its function is as follows. Involved in lipopolysaccharide (LPS) biosynthesis. Translocates lipid A-core from the inner to the outer leaflet of the inner membrane. Transmembrane domains (TMD) form a pore in the inner membrane and the ATP-binding domain (NBD) is responsible for energy generation. This chain is ATP-dependent lipid A-core flippase, found in Legionella pneumophila (strain Lens).